Reading from the N-terminus, the 445-residue chain is Guanosine nucleotide diphosphate dissociation inhibitor 1 (445 aa).

Belongs to the Rab GDI family. In terms of assembly, interacts with the GDP-bound form of RABA5C (via C-terminus). Expressed in roots, rosette leaves, stems, floral buds and siliques.

Regulates the GDP/GTP exchange reaction of most RAB proteins by inhibiting the dissociation of GDP from them, and the subsequent binding of GTP. The polypeptide is Guanosine nucleotide diphosphate dissociation inhibitor 1 (GDI1) (Arabidopsis thaliana (Mouse-ear cress)).